A 1520-amino-acid chain; its full sequence is DNA topoisomerase 2 top-2 (1520 aa).

The segment covering 1-10 (MSDSDSEFSI) has biased composition (acidic residues). Residues 1 to 40 (MSDSDSEFSIEDSPKKKTAPKKEKASPKKKKDDANESMVM) form a disordered region. Basic and acidic residues predominate over residues 12–34 (DSPKKKTAPKKEKASPKKKKDDA). Residues Asn-126, Asn-155, 183–185 (SSN), 196–203 (GRNGYGAK), and 411–413 (QTK) contribute to the ATP site. A Toprim domain is found at 490 to 607 (CTLILTEGDS…SLIQRNFVEE (118 aa)). Positions 496, 576, and 578 each coordinate Mg(2+). The 470-residue stretch at 750–1219 (IPCLVDGFKP…TWQDLWHEDL (470 aa)) folds into the Topo IIA-type catalytic domain. Residue Tyr-840 is the O-(5'-phospho-DNA)-tyrosine intermediate of the active site. A disordered region spans residues 1249-1520 (AADAKTGRGP…RGRVVDSDSD (272 aa)). The span at 1283 to 1320 (TKAKYEKMSQPKKERVKKEPKEPKEPKKVKKEGQDIKK) shows a compositional bias: basic and acidic residues. Positions 1342–1364 (MSEESDVEFDEGIDFDSDDDGVE) are enriched in acidic residues.

It belongs to the type II topoisomerase family. In terms of assembly, homodimer. Interacts with nmad-1; the interaction is required for localization of top-2 to DNA. Interacts with gcna-1; this interaction allows the resolution of topoisomerase 2 DNA-protein cross-links. It depends on Mg(2+) as a cofactor. The cofactor is Mn(2+). Ca(2+) serves as cofactor. Expressed in the hermaphrodite and male germline.

Its subcellular location is the nucleus. The protein resides in the nucleoplasm. It localises to the chromosome. The protein localises to the cytoplasm. It is found in the cytoskeleton. Its subcellular location is the spindle. The enzyme catalyses ATP-dependent breakage, passage and rejoining of double-stranded DNA.. In terms of biological role, control of topological states of DNA by transient breakage and subsequent rejoining of DNA strands. Topoisomerase II makes double-strand breaks. Essential during mitosis in the adult germline and during embryogenesis for proper segregation of daughter chromosomes. Required for centromere resolution during mitosis. Required for chromosome segregation in anaphase of meiosis I during spermatogenesis. Promotes cleavage furrow stability during cytokinesis upon the presence of chromatin obstructions. Promotes DNA break formation upon zygotic genome activation in the Z2 and Z3 primordial germ cells in L1 larvae, thereby activating a checkpoint response. Essential for embryogenesis. The protein is DNA topoisomerase 2 top-2 of Caenorhabditis elegans.